A 471-amino-acid chain; its full sequence is Trehalose-binding lipoprotein LpqY (471 aa).

Positions 1–28 (MDGRQVVRARRWCATAAVALMTASTVAA) are cleaved as a signal peptide. Cys-29 carries the N-palmitoyl cysteine lipid modification. Residue Cys-29 is the site of S-diacylglycerol cysteine attachment. The alpha,alpha-trehalose site is built by Asn-45, Glu-46, Gln-79, Asp-100, Asn-154, Tyr-198, Trp-279, Tyr-281, Gly-354, and Arg-424. Cys-57 and Cys-375 are disulfide-bonded.

It belongs to the bacterial solute-binding protein 1 family. Monomer. The complex is composed of two ATP-binding proteins (SugC), two transmembrane proteins (SugA and SugB) and a solute-binding protein (LpqY).

Its subcellular location is the cell inner membrane. Its function is as follows. Part of the ABC transporter complex LpqY-SugA-SugB-SugC, which is highly specific for uptake of trehalose. Involved in the recycling of extracellular trehalose released from trehalose-containing molecules synthesized by M.thermoresistibile. Trehalose uptake is essential for virulence. Binds deuterated trehalose with similar high affinity to trehalose, trehalose analogs including galactotrehalose, 4-azido-4-deoxy-trehalose, 6-azido-6-deoxy-trehalose, 3-azido-3-deoxy-trehalose and mannotrehalose in the order of decreasing affinity, respectively, and 2-azido-2-deoxy-trehalose and kojibiose (alpha1,2-glycosidic bond) with very low affinity. Does not recognize single glucose, 6-amino-6-deoxy-trehalose, trehalose-6-phosphate, nigerose (alpha1,3-glycosidic bond), maltose (alpha1,4-glycosidic bond), isomaltose (alpha1,6-glycosidic bond) or glycerophosphocholine. Decreased recognition of alpha,beta-trehalose and almost no recognition of beta,beta-trehalose. Substrate specificity indicates a strict requirement for an alpha1,1-linked disaccharide. The chain is Trehalose-binding lipoprotein LpqY from Mycolicibacterium thermoresistibile (strain ATCC 19527 / DSM 44167 / CIP 105390 / JCM 6362 / NCTC 10409 / 316) (Mycobacterium thermoresistibile).